The following is a 277-amino-acid chain: Diaminopimelate epimerase (277 aa).

The substrate site is built by asparagine 13, glutamine 46, and asparagine 66. Cysteine 75 (proton donor) is an active-site residue. Substrate-binding positions include 76–77, asparagine 160, asparagine 193, and 211–212; these read GN and ER. Cysteine 220 acts as the Proton acceptor in catalysis. Residue 221 to 222 participates in substrate binding; the sequence is GS.

The protein belongs to the diaminopimelate epimerase family. In terms of assembly, homodimer.

It is found in the cytoplasm. The enzyme catalyses (2S,6S)-2,6-diaminopimelate = meso-2,6-diaminopimelate. It functions in the pathway amino-acid biosynthesis; L-lysine biosynthesis via DAP pathway; DL-2,6-diaminopimelate from LL-2,6-diaminopimelate: step 1/1. In terms of biological role, catalyzes the stereoinversion of LL-2,6-diaminopimelate (L,L-DAP) to meso-diaminopimelate (meso-DAP), a precursor of L-lysine and an essential component of the bacterial peptidoglycan. The polypeptide is Diaminopimelate epimerase (Legionella pneumophila (strain Paris)).